A 1647-amino-acid polypeptide reads, in one-letter code: Probable ubiquitin fusion degradation protein C12B10.01c (1647 aa).

Residues 192 to 209 (TYSDSSNYHTSTDSSQYN) show a composition bias toward polar residues. 2 disordered regions span residues 192-288 (TYSD…PSAA) and 1039-1076 (ESMS…SSTS). 2 stretches are compositionally biased toward acidic residues: residues 218-228 (DTNDGTDDDIN) and 245-273 (ERDE…ENEN). A compositionally biased stretch (low complexity) spans 1039 to 1050 (ESMSGSSRNSSG). Residues 1051–1065 (DYTDSMSQDAPNHTT) are compositionally biased toward polar residues. Over residues 1066-1076 (EPSERRDSSTS) the composition is skewed to basic and acidic residues. A K-box region spans residues 1183 to 1257 (IENILTDFSN…SVSFLLSRNP (75 aa)). The 354-residue stretch at 1294–1647 (ATYAASENIL…LEGQGSFHLS (354 aa)) folds into the HECT domain. The active-site Glycyl thioester intermediate is Cys1614.

Belongs to the UPL family. K-HECT subfamily.

It carries out the reaction S-ubiquitinyl-[E2 ubiquitin-conjugating enzyme]-L-cysteine + [acceptor protein]-L-lysine = [E2 ubiquitin-conjugating enzyme]-L-cysteine + N(6)-ubiquitinyl-[acceptor protein]-L-lysine.. E3 ubiquitin-protein ligase which accepts ubiquitin from an E2 ubiquitin-conjugating enzyme in the form of a thioester and then directly transfers the ubiquitin to targeted substrates. In Schizosaccharomyces pombe (strain 972 / ATCC 24843) (Fission yeast), this protein is Probable ubiquitin fusion degradation protein C12B10.01c.